We begin with the raw amino-acid sequence, 199 residues long: Holliday junction branch migration complex subunit RuvA (199 aa).

Residues 1 to 65 (MIGWLHGQII…EDALLLYGFL (65 aa)) are domain I. The segment at 66 to 144 (DKEERSLFRS…QFDGSVSDTF (79 aa)) is domain II. The tract at residues 144 to 148 (FQKQA) is flexible linker. The interval 149–199 (GSTHSQQEAISALEALGYKPQEAWKVMNKIDNGNKSCEQLIREALQILSSR) is domain III.

This sequence belongs to the RuvA family. As to quaternary structure, homotetramer. Forms an RuvA(8)-RuvB(12)-Holliday junction (HJ) complex. HJ DNA is sandwiched between 2 RuvA tetramers; dsDNA enters through RuvA and exits via RuvB. An RuvB hexamer assembles on each DNA strand where it exits the tetramer. Each RuvB hexamer is contacted by two RuvA subunits (via domain III) on 2 adjacent RuvB subunits; this complex drives branch migration. In the full resolvosome a probable DNA-RuvA(4)-RuvB(12)-RuvC(2) complex forms which resolves the HJ.

The protein localises to the cytoplasm. In terms of biological role, the RuvA-RuvB-RuvC complex processes Holliday junction (HJ) DNA during genetic recombination and DNA repair, while the RuvA-RuvB complex plays an important role in the rescue of blocked DNA replication forks via replication fork reversal (RFR). RuvA specifically binds to HJ cruciform DNA, conferring on it an open structure. The RuvB hexamer acts as an ATP-dependent pump, pulling dsDNA into and through the RuvAB complex. HJ branch migration allows RuvC to scan DNA until it finds its consensus sequence, where it cleaves and resolves the cruciform DNA. This Legionella pneumophila subsp. pneumophila (strain Philadelphia 1 / ATCC 33152 / DSM 7513) protein is Holliday junction branch migration complex subunit RuvA.